A 662-amino-acid polypeptide reads, in one-letter code: Histidine decarboxylase (662 aa).

2 residues coordinate substrate: Tyr-88 and His-201. N6-(pyridoxal phosphate)lysine is present on Lys-312. Residues 489–518 (QPSPRAKNVIPPPPGTRGLSLESVSEGGDD) form a disordered region.

This sequence belongs to the group II decarboxylase family. As to quaternary structure, homodimer. Requires pyridoxal 5'-phosphate as cofactor.

It carries out the reaction L-histidine + H(+) = histamine + CO2. The protein operates within amine and polyamine biosynthesis; histamine biosynthesis; histamine from L-histidine: step 1/1. Functionally, catalyzes the biosynthesis of histamine from histidine. In Mus musculus (Mouse), this protein is Histidine decarboxylase (Hdc).